Consider the following 383-residue polypeptide: Processive diacylglycerol beta-glucosyltransferase (383 aa).

It belongs to the glycosyltransferase 28 family. UgtP subfamily.

The protein localises to the cell membrane. The enzyme catalyses a 1,2-diacyl-3-O-(beta-D-glucopyranosyl)-sn-glycerol + UDP-alpha-D-glucose = a 1,2-diacyl-3-O-(beta-D-Glc-(1-&gt;6)-beta-D-Glc)-sn-glycerol + UDP + H(+). It catalyses the reaction a 1,2-diacyl-3-O-(beta-D-Glc-(1-&gt;6)-beta-D-Glc)-sn-glycerol + UDP-alpha-D-glucose = a 1,2-diacyl-3-O-(beta-D-Glc-(1-&gt;6)-beta-D-Glc-(1-&gt;6)-beta-D-Glc)-sn-glycerol + UDP + H(+). It carries out the reaction a 1,2-diacyl-sn-glycerol + UDP-alpha-D-glucose = a 1,2-diacyl-3-O-(beta-D-glucopyranosyl)-sn-glycerol + UDP + H(+). The protein operates within glycolipid metabolism; diglucosyl-diacylglycerol biosynthesis. Functionally, processive glucosyltransferase involved in the biosynthesis of both the bilayer- and non-bilayer-forming membrane glucolipids. Is able to successively transfer up to three glucosyl residues to diacylglycerol (DAG), thereby catalyzing the formation of beta-monoglucosyl-DAG (3-O-(beta-D-glucopyranosyl)-1,2-diacyl-sn-glycerol), beta-diglucosyl-DAG (3-O-(beta-D-glucopyranosyl-beta-(1-&gt;6)-D-glucopyranosyl)-1,2-diacyl-sn-glycerol) and beta-triglucosyl-DAG (3-O-(beta-D-glucopyranosyl-beta-(1-&gt;6)-D-glucopyranosyl-beta-(1-&gt;6)-D-glucopyranosyl)-1,2-diacyl-sn-glycerol). Beta-diglucosyl-DAG is the predominant glycolipid found in Bacillales and is also used as a membrane anchor for lipoteichoic acid (LTA). The chain is Processive diacylglycerol beta-glucosyltransferase from Bacillus licheniformis (strain ATCC 14580 / DSM 13 / JCM 2505 / CCUG 7422 / NBRC 12200 / NCIMB 9375 / NCTC 10341 / NRRL NRS-1264 / Gibson 46).